The following is a 440-amino-acid chain: Damage-control phosphatase ARMT1 (440 aa).

Asp252 and Asn253 together coordinate Mn(2+). Position 252–253 (252–253 (DN)) interacts with substrate. Positions 257 and 290 each coordinate S-adenosyl-L-methionine. Residue Asp290 coordinates Mn(2+). Substrate contacts are provided by residues 366–370 (DLNYR) and Lys403. Residues 400–403 (RTLK) carry the Subfamily III RTxK motif motif.

It belongs to the damage-control phosphatase family. Sugar phosphate phosphatase III subfamily. Mn(2+) serves as cofactor. The cofactor is Ni(2+). Post-translationally, automethylated.

The catalysed reaction is beta-D-fructose 1-phosphate + H2O = D-fructose + phosphate. The enzyme catalyses beta-D-fructose 6-phosphate = dihydroxyacetone + D-glyceraldehyde 3-phosphate. It catalyses the reaction L-glutamyl-[protein] + S-adenosyl-L-methionine = [protein]-L-glutamate 5-O-methyl ester + S-adenosyl-L-homocysteine. In terms of biological role, metal-dependent phosphatase that shows phosphatase activity against several substrates, including fructose-1-phosphate and fructose-6-phosphate. Its preference for fructose-1-phosphate, a strong glycating agent that causes DNA damage rather than a canonical yeast metabolite, suggests a damage-control function in hexose phosphate metabolism. Has also been shown to have O-methyltransferase activity that methylates glutamate residues of target proteins to form gamma-glutamyl methyl ester residues. Possibly methylates PCNA, suggesting it is involved in the DNA damage response. The chain is Damage-control phosphatase ARMT1 from Xenopus laevis (African clawed frog).